Reading from the N-terminus, the 1024-residue chain is Zn(2)-C6 fungal-type transcription factor FTF1a (1024 aa).

Residues 137–164 (CIACRRKKVRCSGEKPACKHCLHSHIPC) constitute a DNA-binding region (zn(2)-C6 fungal-type).

The protein localises to the nucleus. In terms of biological role, zn(2)-C6 fungal-type transcription factor that has a role in the establishment of the fungus within the plant and/or the progress of the disease. Regulates the expression of virulence factors such as SIX1 and SIX6. This Fusarium oxysporum f. sp. lycopersici (strain 4287 / CBS 123668 / FGSC 9935 / NRRL 34936) (Fusarium vascular wilt of tomato) protein is Zn(2)-C6 fungal-type transcription factor FTF1a.